Consider the following 224-residue polypeptide: Ribosomal RNA large subunit methyltransferase E (224 aa).

S-adenosyl-L-methionine is bound by residues G64, W66, D97, D113, and D138. Catalysis depends on K178, which acts as the Proton acceptor.

This sequence belongs to the class I-like SAM-binding methyltransferase superfamily. RNA methyltransferase RlmE family.

The protein localises to the cytoplasm. It carries out the reaction uridine(2552) in 23S rRNA + S-adenosyl-L-methionine = 2'-O-methyluridine(2552) in 23S rRNA + S-adenosyl-L-homocysteine + H(+). Its function is as follows. Specifically methylates the uridine in position 2552 of 23S rRNA at the 2'-O position of the ribose in the fully assembled 50S ribosomal subunit. The sequence is that of Ribosomal RNA large subunit methyltransferase E from Albidiferax ferrireducens (strain ATCC BAA-621 / DSM 15236 / T118) (Rhodoferax ferrireducens).